Here is a 375-residue protein sequence, read N- to C-terminus: MEGAGETTTSEGHLTSAAAFVEGGIQDACDDACSICLESFCESDPSTLTSCKHEYHLQCILEWCQRSSQCPMCWQSISLKDPTSQELLEAVEQERNFRFNPTRNATIFRHPTLGDFELQHLPVGVDNAEIEERIIQHLAAAAAMGRARHGVRREGHRSRSSSQGHQQFMVFSSQPNASSPPPHPPMPSSPSQRDESDTVSNLPHNALGEGSHQSNTQPPTSSHPRQVSPSASDSNSRPLNQSSPSEQDRAGPSELQSFSESLKSRLNAVSTRYKESISKNTRNWKDRLFSRNTSMADLGSEVKREVSAGIATVSRMMERLETRENSRPSTASVSDVSENHTPETNNEHNRAAAGDEHSVNERGVKETCATGSGSS.

The RING-type; atypical zinc finger occupies 33 to 74 (CSICLESFCESDPSTLTSCKHEYHLQCILEWCQRSSQCPMCW). Positions 146–159 (RARHGVRREGHRSR) are enriched in basic residues. Disordered stretches follow at residues 146–165 (RARH…SQGH), 172–262 (SSQP…SESL), and 318–375 (ERLE…SGSS). Positions 178 to 188 (SSPPPHPPMPS) are enriched in pro residues. 2 stretches are compositionally biased toward polar residues: residues 211–245 (SHQS…SSPS) and 327–336 (RPSTASVSDV). Over residues 337 to 365 (SENHTPETNNEHNRAAAGDEHSVNERGVK) the composition is skewed to basic and acidic residues.

It carries out the reaction S-ubiquitinyl-[E2 ubiquitin-conjugating enzyme]-L-cysteine + [acceptor protein]-L-lysine = [E2 ubiquitin-conjugating enzyme]-L-cysteine + N(6)-ubiquitinyl-[acceptor protein]-L-lysine.. It functions in the pathway protein modification; protein ubiquitination. Functionally, E3 ubiquitin-protein ligase involved in the positive regulation of the gametogenesis progression. Required for the degradation of KRP6, a cyclin-dependent kinase inhibitor which accumulates during meiosis and blocks the progression of subsequent mitoses during gametophytes development. Functions in association with RHF1A. The chain is E3 ubiquitin-protein ligase RHF2A from Arabidopsis thaliana (Mouse-ear cress).